Consider the following 93-residue polypeptide: Small ribosomal subunit protein uS19 (93 aa).

Belongs to the universal ribosomal protein uS19 family.

In terms of biological role, protein S19 forms a complex with S13 that binds strongly to the 16S ribosomal RNA. This is Small ribosomal subunit protein uS19 from Nitratidesulfovibrio vulgaris (strain ATCC 29579 / DSM 644 / CCUG 34227 / NCIMB 8303 / VKM B-1760 / Hildenborough) (Desulfovibrio vulgaris).